Reading from the N-terminus, the 139-residue chain is Trafficking protein particle complex subunit 2-like protein (139 aa).

It belongs to the TRAPP small subunits family. Sedlin subfamily. Component of the multisubunit TRAPP (transport protein particle) complex, which includes at least TRAPPC2, TRAPPC2L, TRAPPC3, TRAPPC3L, TRAPPC4, TRAPPC5, TRAPPC8, TRAPPC9, TRAPPC10, TRAPPC11 and TRAPPC12. Interacts with the heterodimer TRAPPC3-TRAPPC6A.

The protein resides in the cytoplasm. It localises to the perinuclear region. It is found in the endoplasmic reticulum. The protein localises to the golgi apparatus. In terms of biological role, may play a role in vesicular transport from endoplasmic reticulum to Golgi. This Rattus norvegicus (Rat) protein is Trafficking protein particle complex subunit 2-like protein (Trappc2l).